We begin with the raw amino-acid sequence, 332 residues long: 2-oxoglutarate-dependent dioxygenase ecdK (332 aa).

A Fe2OG dioxygenase domain is found at 178-294; sequence HASELRLNHY…RRSVAFFLKP (117 aa). Positions 206, 208, and 266 each coordinate Fe cation. Residue R285 coordinates 2-oxoglutarate.

The protein belongs to the iron/ascorbate-dependent oxidoreductase family. Requires Fe(2+) as cofactor.

It participates in antifungal biosynthesis. In terms of biological role, 2-oxoglutarate-dependent dioxygenase; part of the gene cluster that mediates the biosynthesis of echinocandin B, a fungal lipidated cyclic hexapeptide that acts as an antifungal agent. Linoleoyl-AMP, produced by the fatty-acyl-AMP ligase ecdI, is transferred to the initiation carrier domain (T0) of ecdA. The linoleoyl-S-phosphopantetheinyl-T0 is sequentially extended with L-ornithine, L-threonine, L-proline, L-homotyrosine, L-threonine, and 4R-methyl-L-proline to form the linear hexapeptide. Thereafter, the terminal condensation (C7) performs macrocyclization of the NRPS product and the cyclic scaffold is released from ecdA. All six of the amino acid residues are hydroxylated, including 4R,5R-dihydroxy-L-ornithine, 4R-hydroxyl-L-proline, 3S,4S-dihydroxy-L-homotyrosine, and 3S-hydroxyl-4S-methyl-L-prolin. In the pathway, all the hydroxylation reactions are proposed to occur following completion of the cyclic peptide, so the unhydroxylated precursor produced by ecdA will undergo six rounds of hydroxylation. Five hydroxylase genes (ecdG, ecdH, ecdK, htyE and htyF) are embedded within the echinocandin B (ecd) and L-homotyrosine (hty) clusters. The sequence is that of 2-oxoglutarate-dependent dioxygenase ecdK from Aspergillus rugulosus (Emericella rugulosa).